The chain runs to 241 residues: ATP synthase subunit a (241 aa).

The next 5 helical transmembrane spans lie at 30 to 50 (GQVF…ISLG), 91 to 111 (FIGT…LIPW), 128 to 148 (INTT…AGLS), 193 to 213 (LVVG…VMFL), and 214 to 234 (GLFT…YYIG).

The protein belongs to the ATPase A chain family. F-type ATPases have 2 components, CF(1) - the catalytic core - and CF(0) - the membrane proton channel. CF(1) has five subunits: alpha(3), beta(3), gamma(1), delta(1), epsilon(1). CF(0) has four main subunits: a, b, b' and c.

The protein localises to the cellular thylakoid membrane. Key component of the proton channel; it plays a direct role in the translocation of protons across the membrane. The protein is ATP synthase subunit a of Prochlorococcus marinus (strain MIT 9301).